The sequence spans 570 residues: Probable diguanylate cyclase DgcQ (570 aa).

Transmembrane regions (helical) follow at residues 20-40 (FGPG…STLL) and 360-380 (IALT…WGVI). The region spanning 428-563 (QPFSVIQLDL…GRNRICASDA (136 aa)) is the GGDEF domain. Position 436 (aspartate 436) interacts with Mg(2+). Residues asparagine 444, histidine 449, and aspartate 453 each contribute to the substrate site. Glutamate 479 is a Mg(2+) binding site. Catalysis depends on glutamate 479, which acts as the Proton acceptor.

As to quaternary structure, homodimer. The cofactor is Mg(2+).

Its subcellular location is the cell inner membrane. The catalysed reaction is 2 GTP = 3',3'-c-di-GMP + 2 diphosphate. It functions in the pathway glycan metabolism; bacterial cellulose biosynthesis. The protein operates within purine metabolism; 3',5'-cyclic di-GMP biosynthesis. Catalyzes the synthesis of cyclic-di-GMP (c-di-GMP) via the condensation of 2 GTP molecules. Cyclic-di-GMP is a second messenger which controls cell surface-associated traits in bacteria. Involved in the regulation of cellulose production. In Salmonella choleraesuis (strain SC-B67), this protein is Probable diguanylate cyclase DgcQ.